Reading from the N-terminus, the 386-residue chain is Succinate--CoA ligase [ADP-forming] subunit beta (386 aa).

An ATP-grasp domain is found at 9-244 (KEILKQYGVK…LDEEDEKEIE (236 aa)). ATP is bound by residues Lys-46, 53–55 (GRG), Glu-99, Cys-102, and Glu-107. Mg(2+) is bound by residues Asn-199 and Asp-213. Substrate contacts are provided by residues Asn-264 and 321 to 323 (GIM).

The protein belongs to the succinate/malate CoA ligase beta subunit family. As to quaternary structure, heterotetramer of two alpha and two beta subunits. It depends on Mg(2+) as a cofactor.

The enzyme catalyses succinate + ATP + CoA = succinyl-CoA + ADP + phosphate. It carries out the reaction GTP + succinate + CoA = succinyl-CoA + GDP + phosphate. It functions in the pathway carbohydrate metabolism; tricarboxylic acid cycle; succinate from succinyl-CoA (ligase route): step 1/1. In terms of biological role, succinyl-CoA synthetase functions in the citric acid cycle (TCA), coupling the hydrolysis of succinyl-CoA to the synthesis of either ATP or GTP and thus represents the only step of substrate-level phosphorylation in the TCA. The beta subunit provides nucleotide specificity of the enzyme and binds the substrate succinate, while the binding sites for coenzyme A and phosphate are found in the alpha subunit. This is Succinate--CoA ligase [ADP-forming] subunit beta from Brevibacillus brevis (strain 47 / JCM 6285 / NBRC 100599).